Consider the following 61-residue polypeptide: Metallothionein-2 (61 aa).

Met-1 is modified (N-acetylmethionine). Residues 1–29 (MDPNCSCATDGSCSCAGSCKCKECKCTTC) form a beta region. The a divalent metal cation site is built by Cys-5, Cys-7, Cys-13, Cys-15, Cys-19, Cys-21, Cys-24, Cys-26, Cys-29, Cys-33, Cys-34, Cys-36, Cys-37, Cys-41, Cys-44, Cys-48, Cys-50, and Cys-57. Residues 30–61 (KKSCCSCCPVGCAKCSQGCVCKEASDKCSCCA) form an alpha region. Position 58 is a phosphoserine (Ser-58). Positions 59 and 60 each coordinate a divalent metal cation.

It belongs to the metallothionein superfamily. Type 1 family.

In terms of biological role, metallothioneins have a high content of cysteine residues that bind various heavy metals; these proteins are transcriptionally regulated by both heavy metals and glucocorticoids. The protein is Metallothionein-2 (MT2) of Cricetulus griseus (Chinese hamster).